Consider the following 474-residue polypeptide: tRNA-2-methylthio-N(6)-dimethylallyladenosine synthase (474 aa).

Residues 3–120 form the MTTase N-terminal domain; that stretch reads KKLHIKTWGC…LPEMINSVRG (118 aa). [4Fe-4S] cluster is bound by residues Cys-12, Cys-49, Cys-83, Cys-157, Cys-161, and Cys-164. Residues 143 to 378 enclose the Radical SAM core domain; it reads RADGPSAFVS…INQQVTAWSR (236 aa). The TRAM domain occupies 378–441; the sequence is RRMLGTTQRI…TNSMRGKVVR (64 aa).

Belongs to the methylthiotransferase family. MiaB subfamily. Monomer. The cofactor is [4Fe-4S] cluster.

Its subcellular location is the cytoplasm. It carries out the reaction N(6)-dimethylallyladenosine(37) in tRNA + (sulfur carrier)-SH + AH2 + 2 S-adenosyl-L-methionine = 2-methylsulfanyl-N(6)-dimethylallyladenosine(37) in tRNA + (sulfur carrier)-H + 5'-deoxyadenosine + L-methionine + A + S-adenosyl-L-homocysteine + 2 H(+). Its function is as follows. Catalyzes the methylthiolation of N6-(dimethylallyl)adenosine (i(6)A), leading to the formation of 2-methylthio-N6-(dimethylallyl)adenosine (ms(2)i(6)A) at position 37 in tRNAs that read codons beginning with uridine. In Enterobacter sp. (strain 638), this protein is tRNA-2-methylthio-N(6)-dimethylallyladenosine synthase.